A 641-amino-acid chain; its full sequence is Soluble starch synthase 1, chloroplastic/amyloplastic (641 aa).

Lys-145 is an ADP-alpha-D-glucose binding site.

It belongs to the glycosyltransferase 1 family. Bacterial/plant glycogen synthase subfamily. As to expression, high expression in leaves and very low in tubers.

The protein localises to the plastid. Its subcellular location is the chloroplast. It is found in the amyloplast. The enzyme catalyses [(1-&gt;4)-alpha-D-glucosyl](n) + ADP-alpha-D-glucose = [(1-&gt;4)-alpha-D-glucosyl](n+1) + ADP + H(+). It functions in the pathway glycan biosynthesis; starch biosynthesis. Functionally, plays a minor role in starch synthesis in storage organs (tubers), but may contribute to the deposition of transient starch in chloroplasts of leaves. This chain is Soluble starch synthase 1, chloroplastic/amyloplastic, found in Solanum tuberosum (Potato).